The sequence spans 221 residues: Small ribosomal subunit protein uS3c (221 aa).

The region spanning Ile43 to Ala121 is the KH type-2 domain.

Belongs to the universal ribosomal protein uS3 family. In terms of assembly, part of the 30S ribosomal subunit.

It is found in the plastid. The protein localises to the chloroplast. In Jasminum nudiflorum (Winter jasmine), this protein is Small ribosomal subunit protein uS3c (rps3).